Here is a 501-residue protein sequence, read N- to C-terminus: Cytochrome P450 76M5 (501 aa).

A helical transmembrane segment spans residues 5-25 (ELWVLAAALAVSLLYYLAALM). Residue Cys443 coordinates heme.

Belongs to the cytochrome P450 family. It depends on heme as a cofactor.

Its subcellular location is the membrane. It catalyses the reaction ent-sandaracopimaradien-3beta-ol + reduced [NADPH--hemoprotein reductase] + O2 = oryzalexin E + oxidized [NADPH--hemoprotein reductase] + H2O + H(+). Its function is as follows. Enzyme of the diterpenoid metabolism involved in the biosynthesis of the oryzalexin class of phytoalexins. Hydroxylates ent-sandaracopimaradien. The chain is Cytochrome P450 76M5 from Oryza sativa subsp. japonica (Rice).